A 620-amino-acid polypeptide reads, in one-letter code: Glutathione-regulated potassium-efflux system protein KefC (620 aa).

Over 1-3 (MDS) the chain is Periplasmic. Residues 4–24 (HTLIQALIYLGSAALIVPIAV) traverse the membrane as a helical segment. A topological domain (cytoplasmic) is located at residue Arg25. Residues 26–46 (LGLGSVLGYLIAGCIIGPWGL) traverse the membrane as a helical segment. The Periplasmic segment spans residues 47-53 (RLVTDAE). A helical membrane pass occupies residues 54–74 (SILHFAEIGVVLMLFIIGLEL). The Cytoplasmic segment spans residues 75–89 (DPQRLWKLRAAVFGG). A helical transmembrane segment spans residues 90-110 (GALQMVICGGLLGLFCMLLGL). Over 111-113 (RWQ) the chain is Periplasmic. The chain crosses the membrane as a helical span at residues 114-134 (VAELIGMTLALSSTAIAMQAM). The Cytoplasmic segment spans residues 135–148 (NERNLMVTQMGRSA). A helical membrane pass occupies residues 149–169 (FAVLLFQDIAAIPLVAMIPLL). The Periplasmic portion of the chain corresponds to 170-177 (AASSASTT). The helical transmembrane segment at 178-198 (MGAFVLSALKVAGALALVVLL) threads the bilayer. At 199–213 (GRYVTRPALRFVARS) the chain is on the cytoplasmic side. The chain crosses the membrane as a helical span at residues 214–233 (GLREVFSAVALFLVFGFGLL). Topologically, residues 234 to 236 (LEE) are periplasmic. A helical transmembrane segment spans residues 237 to 254 (VGLSMAMGAFLAGVLLAS). The Cytoplasmic segment spans residues 255–269 (SEYRHALESDIEPFK). Residues 270–290 (GLLLGLFFIGVGMSIDFGTLL) traverse the membrane as a helical segment. Residues 291–293 (ENP) are Periplasmic-facing. A helical membrane pass occupies residues 294-314 (LRIVILLLGFLIIKIAMLWLI). At 315-326 (ARPLQVPNKQRR) the chain is on the cytoplasmic side. The chain crosses the membrane as a helical span at residues 327 to 347 (WFAVLLGQGSEFAFVVFGAAQ). The Periplasmic segment spans residues 348–358 (MANVLEPEWAK). Residues 359–379 (SLTLAVALSMAATPILLVILN) traverse the membrane as a helical segment. Residues 380-620 (RLEQSSTEEA…ADEPETKPSS (241 aa)) are Cytoplasmic-facing. The 120-residue stretch at 399–518 (QPRVIIAGFG…AGVEKPERET (120 aa)) folds into the RCK N-terminal domain. Residues 597–620 (GWQGTEEGKHTGNMADEPETKPSS) are disordered.

This sequence belongs to the monovalent cation:proton antiporter 2 (CPA2) transporter (TC 2.A.37) family. KefC subfamily. As to quaternary structure, homodimer. Interacts with the regulatory subunit KefF.

The protein localises to the cell inner membrane. Functionally, pore-forming subunit of a potassium efflux system that confers protection against electrophiles. Catalyzes K(+)/H(+) antiport. The sequence is that of Glutathione-regulated potassium-efflux system protein KefC from Escherichia coli O6:H1 (strain CFT073 / ATCC 700928 / UPEC).